Here is a 613-residue protein sequence, read N- to C-terminus: DBH-like monooxygenase protein 1 (613 aa).

Residues 1 to 19 (MCGWPLLVLWALLPATAAG) form the signal peptide. The Lumenal portion of the chain corresponds to 20–587 (SPGRSYPHRV…PLVCEKAASP (568 aa)). One can recognise a DOMON domain in the interval 35–148 (GKYWLHWGRQ…STVRVIWAYH (114 aa)). Asn-114 is a glycosylation site (N-linked (GlcNAc...) asparagine). Tyr-203 is a catalytic residue. 2 disulfide bridges follow: Cys-205-Cys-257 and Cys-242-Cys-269. The Cu cation site is built by His-235 and His-236. N-linked (GlcNAc...) asparagine glycosylation is present at Asn-247. His-307, His-389, His-391, and Met-464 together coordinate Cu cation. Intrachain disulfides connect Cys-364–Cys-480, Cys-368–Cys-550, and Cys-443–Cys-465. The active site involves His-389. Asn-476 and Asn-517 each carry an N-linked (GlcNAc...) asparagine glycan. Residues 588–608 (PLHGIFSLRLLTCALLLGSML) form a helical membrane-spanning segment.

It belongs to the copper type II ascorbate-dependent monooxygenase family. It depends on Cu(2+) as a cofactor. N-glycosylated. Broadly exprressed, with highest levels in salivary gland and ovary.

The protein localises to the endoplasmic reticulum membrane. In Mus musculus (Mouse), this protein is DBH-like monooxygenase protein 1 (Moxd1).